The primary structure comprises 438 residues: Chromosomal replication initiator protein DnaA (438 aa).

Residues 1 to 68 form a domain I, interacts with DnaA modulators region; the sequence is MKDNILSALK…VVKESLGKDA (68 aa). Residues 68 to 98 form a domain II region; the sequence is ATFEIVYKEIDITQENEEKGPLVRKRPLLIT. The interval 99–314 is domain III, AAA+ region; that stretch reads PLNPKYTFEN…GAILKLIAYK (216 aa). Gly-142, Gly-144, Lys-145, and Thr-146 together coordinate ATP. The interval 315 to 438 is domain IV, binds dsDNA; sequence NLYGSLNLSI…TKNFAQGESI (124 aa).

Belongs to the DnaA family. In terms of assembly, oligomerizes as a right-handed, spiral filament on DNA at oriC.

Its subcellular location is the cytoplasm. Functionally, plays an essential role in the initiation and regulation of chromosomal replication. ATP-DnaA binds to the origin of replication (oriC) to initiate formation of the DNA replication initiation complex once per cell cycle. Binds the DnaA box (a 9 base pair repeat at the origin) and separates the double-stranded (ds)DNA. Forms a right-handed helical filament on oriC DNA; dsDNA binds to the exterior of the filament while single-stranded (ss)DNA is stabiized in the filament's interior. The ATP-DnaA-oriC complex binds and stabilizes one strand of the AT-rich DNA unwinding element (DUE), permitting loading of DNA polymerase. After initiation quickly degrades to an ADP-DnaA complex that is not apt for DNA replication. Binds acidic phospholipids. The protein is Chromosomal replication initiator protein DnaA of Thermosipho africanus (strain TCF52B).